The chain runs to 322 residues: Ferrochelatase (322 aa).

Fe cation contacts are provided by His195 and Glu276.

The protein belongs to the ferrochelatase family.

Its subcellular location is the cytoplasm. The enzyme catalyses heme b + 2 H(+) = protoporphyrin IX + Fe(2+). It functions in the pathway porphyrin-containing compound metabolism; protoheme biosynthesis; protoheme from protoporphyrin-IX: step 1/1. Functionally, catalyzes the ferrous insertion into protoporphyrin IX. The sequence is that of Ferrochelatase from Edwardsiella ictaluri (strain 93-146).